The chain runs to 294 residues: Lipoyl synthase (294 aa).

Cys-41, Cys-46, Cys-52, Cys-67, Cys-71, Cys-74, and Ser-281 together coordinate [4Fe-4S] cluster. The 218-residue stretch at 53-270 (FNNGTATFMI…KLESLAMGFT (218 aa)) folds into the Radical SAM core domain.

Belongs to the radical SAM superfamily. Lipoyl synthase family. The cofactor is [4Fe-4S] cluster.

It localises to the cytoplasm. It carries out the reaction [[Fe-S] cluster scaffold protein carrying a second [4Fe-4S](2+) cluster] + N(6)-octanoyl-L-lysyl-[protein] + 2 oxidized [2Fe-2S]-[ferredoxin] + 2 S-adenosyl-L-methionine + 4 H(+) = [[Fe-S] cluster scaffold protein] + N(6)-[(R)-dihydrolipoyl]-L-lysyl-[protein] + 4 Fe(3+) + 2 hydrogen sulfide + 2 5'-deoxyadenosine + 2 L-methionine + 2 reduced [2Fe-2S]-[ferredoxin]. It functions in the pathway protein modification; protein lipoylation via endogenous pathway; protein N(6)-(lipoyl)lysine from octanoyl-[acyl-carrier-protein]: step 2/2. In terms of biological role, catalyzes the radical-mediated insertion of two sulfur atoms into the C-6 and C-8 positions of the octanoyl moiety bound to the lipoyl domains of lipoate-dependent enzymes, thereby converting the octanoylated domains into lipoylated derivatives. The chain is Lipoyl synthase from Baumannia cicadellinicola subsp. Homalodisca coagulata.